Reading from the N-terminus, the 96-residue chain is Co-chaperonin GroES (96 aa).

This sequence belongs to the GroES chaperonin family. In terms of assembly, heptamer of 7 subunits arranged in a ring. Interacts with the chaperonin GroEL.

The protein resides in the cytoplasm. Together with the chaperonin GroEL, plays an essential role in assisting protein folding. The GroEL-GroES system forms a nano-cage that allows encapsulation of the non-native substrate proteins and provides a physical environment optimized to promote and accelerate protein folding. GroES binds to the apical surface of the GroEL ring, thereby capping the opening of the GroEL channel. The sequence is that of Co-chaperonin GroES from Idiomarina loihiensis (strain ATCC BAA-735 / DSM 15497 / L2-TR).